A 133-amino-acid chain; its full sequence is ATP synthase epsilon chain (133 aa).

Belongs to the ATPase epsilon chain family. As to quaternary structure, F-type ATPases have 2 components, CF(1) - the catalytic core - and CF(0) - the membrane proton channel. CF(1) has five subunits: alpha(3), beta(3), gamma(1), delta(1), epsilon(1). CF(0) has three main subunits: a, b and c.

Its subcellular location is the cell membrane. Its function is as follows. Produces ATP from ADP in the presence of a proton gradient across the membrane. The chain is ATP synthase epsilon chain from Clostridium perfringens (strain ATCC 13124 / DSM 756 / JCM 1290 / NCIMB 6125 / NCTC 8237 / Type A).